The sequence spans 399 residues: 1-deoxy-D-xylulose 5-phosphate reductoisomerase (399 aa).

NADPH is bound by residues Thr-13, Gly-14, Ser-15, Ile-16, and Asn-127. Lys-128 contacts 1-deoxy-D-xylulose 5-phosphate. Glu-129 contributes to the NADPH binding site. Asp-153 is a Mn(2+) binding site. 4 residues coordinate 1-deoxy-D-xylulose 5-phosphate: Ser-154, Glu-155, Ser-187, and His-210. Residue Glu-155 participates in Mn(2+) binding. NADPH is bound at residue Gly-216. Residues Ser-223, Asn-228, Lys-229, and Glu-232 each contribute to the 1-deoxy-D-xylulose 5-phosphate site. Glu-232 contacts Mn(2+).

This sequence belongs to the DXR family. The cofactor is Mg(2+). Requires Mn(2+) as cofactor.

It carries out the reaction 2-C-methyl-D-erythritol 4-phosphate + NADP(+) = 1-deoxy-D-xylulose 5-phosphate + NADPH + H(+). It functions in the pathway isoprenoid biosynthesis; isopentenyl diphosphate biosynthesis via DXP pathway; isopentenyl diphosphate from 1-deoxy-D-xylulose 5-phosphate: step 1/6. Functionally, catalyzes the NADPH-dependent rearrangement and reduction of 1-deoxy-D-xylulose-5-phosphate (DXP) to 2-C-methyl-D-erythritol 4-phosphate (MEP). The sequence is that of 1-deoxy-D-xylulose 5-phosphate reductoisomerase from Bordetella petrii (strain ATCC BAA-461 / DSM 12804 / CCUG 43448).